We begin with the raw amino-acid sequence, 418 residues long: Tyrosine--tRNA ligase (418 aa).

Tyr34 contributes to the L-tyrosine binding site. Positions Pro39 to His48 match the 'HIGH' region motif. Residues Tyr169 and Gln173 each contribute to the L-tyrosine site. The 'KMSKS' region signature appears at Lys229–Ser233. Lys232 lines the ATP pocket. Positions Leu352–Tyr418 constitute an S4 RNA-binding domain.

Belongs to the class-I aminoacyl-tRNA synthetase family. TyrS type 1 subfamily. Homodimer.

It localises to the cytoplasm. The catalysed reaction is tRNA(Tyr) + L-tyrosine + ATP = L-tyrosyl-tRNA(Tyr) + AMP + diphosphate + H(+). Functionally, catalyzes the attachment of tyrosine to tRNA(Tyr) in a two-step reaction: tyrosine is first activated by ATP to form Tyr-AMP and then transferred to the acceptor end of tRNA(Tyr). The protein is Tyrosine--tRNA ligase of Streptococcus equi subsp. zooepidemicus (strain H70).